The primary structure comprises 377 residues: D-alanine--D-alanine ligase (377 aa).

One can recognise an ATP-grasp domain in the interval 140 to 349; sequence KELLTVNNIR…NVELVDKLID (210 aa). 170 to 225 provides a ligand contact to ATP; the sequence is VKDLGDVVFVKAANQGSSVGVSRAKTADEFEAALTDSFQYDYKVLIEAAVKGPREL. 3 residues coordinate Mg(2+): D303, E316, and N318.

It belongs to the D-alanine--D-alanine ligase family. The cofactor is Mg(2+). Mn(2+) serves as cofactor.

It is found in the cytoplasm. The catalysed reaction is 2 D-alanine + ATP = D-alanyl-D-alanine + ADP + phosphate + H(+). Its pathway is cell wall biogenesis; peptidoglycan biosynthesis. In terms of biological role, cell wall formation. In Leuconostoc citreum (strain KM20), this protein is D-alanine--D-alanine ligase.